Reading from the N-terminus, the 767-residue chain is Polyribonucleotide nucleotidyltransferase (767 aa).

Residues aspartate 488 and aspartate 494 each coordinate Mg(2+). Positions 555 to 614 (PRLYTMKINPEKIRDVIGKGGSVIRALTEETGCQIDIGEDGTITIASTDADKAELAKKRI) constitute a KH domain. The region spanning 624–692 (GKVYEGPVVK…EKGRIKLSMK (69 aa)) is the S1 motif domain. Basic and acidic residues predominate over residues 700-742 (GMEFEERAPRREGGFGDRGDRGDRGPRRDRGGDRPERGERPAR). Residues 700-767 (GMEFEERAPR…QPQQQQGQQQ (68 aa)) form a disordered region. Residues 752 to 767 (GAPAAGQPQQQQGQQQ) are compositionally biased toward low complexity.

It belongs to the polyribonucleotide nucleotidyltransferase family. Mg(2+) serves as cofactor.

It localises to the cytoplasm. The catalysed reaction is RNA(n+1) + phosphate = RNA(n) + a ribonucleoside 5'-diphosphate. In terms of biological role, involved in mRNA degradation. Catalyzes the phosphorolysis of single-stranded polyribonucleotides processively in the 3'- to 5'-direction. In Leptothrix cholodnii (strain ATCC 51168 / LMG 8142 / SP-6) (Leptothrix discophora (strain SP-6)), this protein is Polyribonucleotide nucleotidyltransferase.